The sequence spans 108 residues: Cytochrome bo(3) ubiquinol oxidase subunit 4 (108 aa).

Residues 1-16 (MNKYKKIKNNFDKEKK) lie on the Cytoplasmic side of the membrane. A helical transmembrane segment spans residues 17 to 37 (SYIVGFLFSLFLTIIPFFCTL). The Extracellular portion of the chain corresponds to 38 to 46 (NHLFSRKIN). Residues 47–67 (FFVILLCALSQIIIHFIYFLH) traverse the membrane as a helical segment. The Cytoplasmic segment spans residues 68–77 (LDFSKKNSWN). The helical transmembrane segment at 78 to 98 (IISLLFILIIVFIIVFGSIWI) threads the bilayer. Over 99–108 (MYNLNHHVIL) the chain is Extracellular.

The protein belongs to the cytochrome c oxidase bacterial subunit 4 family. As to quaternary structure, heterooctamer of two A chains, two B chains, two C chains and two D chains.

The protein resides in the cell membrane. Its function is as follows. Cytochrome bo(3) ubiquinol terminal oxidase is the component of the aerobic respiratory chain of E.coli that predominates when cells are grown at high aeration. Has proton pump activity across the membrane in addition to electron transfer, pumping 2 protons/electron. The chain is Cytochrome bo(3) ubiquinol oxidase subunit 4 (cyoD) from Buchnera aphidicola subsp. Schizaphis graminum (strain Sg).